A 478-amino-acid chain; its full sequence is Zinc finger protein 410 (478 aa).

Disordered regions lie at residues 84-113 (PDGEETRAQTVQKSPEFLTTPESPSLLQDL) and 187-214 (NAKTGSNGENVHLGSGDGQPKDSGPLPQ). The segment covering 103–113 (TPESPSLLQDL) has biased composition (polar residues). C2H2-type zinc fingers lie at residues 219 to 243 (LKCTVEGCDRTFVWPAHFKYHLKTH), 249 to 273 (FICPAEGCGKSFYVLQRLKVHMRTH), 279 to 303 (FMCHESGCGKQFTTAGNLKNHRRIH), 309 to 333 (FLCEAQGCGRSFAEYSSLRKHLVVH), and 339 to 362 (HQCQVCGKTFSQSGSRNVHMRKHH). 20 residues coordinate Zn(2+): Cys-221, Cys-226, His-239, His-243, Cys-251, Cys-256, His-269, His-273, Cys-281, Cys-286, His-299, His-303, Cys-311, Cys-316, His-329, His-333, Cys-341, Cys-344, His-357, and His-361.

In terms of assembly, interacts with CDKN2A/p14ARF. Post-translationally, O-glycosylated. O-GlcNAcylation may occur in response to increasing glucose levels and affect transcription factor activity. Sumoylated. Sumoylation increases its half-life, possibly by blocking ubiquitin-mediated degradation.

It localises to the nucleus. Its subcellular location is the chromosome. Transcription factor that binds to the sequence motif 5'-CATCCCATAATA-3', and is specifically required to silence expression of fetal hemoglobin in adult erythroid cells. Prevents expression of fetal hemoglobin genes HBG1 and HBG2 through CHD4: acts as a direct transcriptional activator of CHD4, a central component of the NuRD complex that represses transcription of fetal hemoglobin genes HBG1 and HBG2 in erythroid cells. May also activate transcription of matrix-remodeling genes such as MMP1 during fibroblast senescence. May activate transcription of the gap junction gene GJC1, perhaps in response to increasing glucose. However, recent studies suggest that ZNF410 is dedicated to regulate expression of a single gene: CHD4. This Mus musculus (Mouse) protein is Zinc finger protein 410.